Here is a 485-residue protein sequence, read N- to C-terminus: Glycogen synthase (485 aa).

Lys-21 is a binding site for ADP-alpha-D-glucose.

This sequence belongs to the glycosyltransferase 1 family. Bacterial/plant glycogen synthase subfamily.

It carries out the reaction [(1-&gt;4)-alpha-D-glucosyl](n) + ADP-alpha-D-glucose = [(1-&gt;4)-alpha-D-glucosyl](n+1) + ADP + H(+). It functions in the pathway glycan biosynthesis; glycogen biosynthesis. In terms of biological role, synthesizes alpha-1,4-glucan chains using ADP-glucose. This Pseudomonas savastanoi pv. phaseolicola (strain 1448A / Race 6) (Pseudomonas syringae pv. phaseolicola (strain 1448A / Race 6)) protein is Glycogen synthase.